A 145-amino-acid polypeptide reads, in one-letter code: Superoxide dismutase [Mn/Fe] (145 aa).

His10 and His64 together coordinate Fe(3+). Mn(2+) is bound by residues His10 and His64.

This sequence belongs to the iron/manganese superoxide dismutase family. Requires Mn(2+) as cofactor. It depends on Fe(3+) as a cofactor.

It carries out the reaction 2 superoxide + 2 H(+) = H2O2 + O2. Its function is as follows. Destroys superoxide anion radicals which are normally produced within the cells and which are toxic to biological systems. Catalyzes the dismutation of superoxide anion radicals into O2 and H2O2 by successive reduction and oxidation of the transition metal ion at the active site. This chain is Superoxide dismutase [Mn/Fe] (sodA), found in Streptococcus alactolyticus.